The chain runs to 370 residues: Serine/threonine-protein kinase SAPK5 (370 aa).

In terms of domain architecture, Protein kinase spans 4-260; that stretch reads YEPVREIGAG…MGEIKSHPWF (257 aa). Residues 10 to 18 and Lys33 each bind ATP; that span reads IGAGNFGVA. The Proton acceptor role is filled by Asp123. Positions 312 to 370 are disordered; it reads EAQTVPKPDKPVSGYGWGTDDDDDDQQPAEEEDEEDDYDRTVREVHASVDLDMSNLQIS. The span at 330–349 shows a compositional bias: acidic residues; it reads TDDDDDDQQPAEEEDEEDDY. Positions 350–360 are enriched in basic and acidic residues; sequence DRTVREVHASV.

It belongs to the protein kinase superfamily. Ser/Thr protein kinase family. May be phosphorylated. In terms of tissue distribution, expressed in leaf blades, leaf sheaths and roots. Expressed in shoots and roots of young seedlings.

The protein localises to the cytoplasm. The protein resides in the nucleus. It catalyses the reaction L-seryl-[protein] + ATP = O-phospho-L-seryl-[protein] + ADP + H(+). It carries out the reaction L-threonyl-[protein] + ATP = O-phospho-L-threonyl-[protein] + ADP + H(+). Activated by hyperosmotic stress. In terms of biological role, may play a role in signal transduction of hyperosmotic response. The polypeptide is Serine/threonine-protein kinase SAPK5 (SAPK5) (Oryza sativa subsp. japonica (Rice)).